We begin with the raw amino-acid sequence, 701 residues long: MAQKDVLTDLTKVRNIGIMAHIDAGKTTTTERILYYTGISYKIGEVHDGAATMDWMEQEQERGITITSAATTCFWNDNQINIIDTPGHVDFTVEVERSLRVLDGAVAVFDGKEGVEPQSEQVWRQADKYDVPRICFVNKMDKIGADFYFSVRTMEERLGANVIPIQLPVGSEGDFEGVVDLVEMKAKVWSADAKLGEKYDVVDIPADLQEKADEYRTKLLEAVAETDEALLEKYLGGEELTEAEIKGAIRKLTITSEAYPVLCGSAFKNKGVQPMLDAVIDYLPSPLDVPAAIGHVPGKEDEEVVRKPSTDEPFSALAFKVATHPFFGKLTYVRVYSGKVDSGSQVINSTKGKKERLGKLFQMHSNKENPVETASAGHIYAVIGLKDTTTGDTLSDPNNQIVLESMTFPDPVIEVAIEPKTKSDQEKLSLSIQKLAEEDPTFKVHLDQETGQTVIGGMGELHLDILVDRMRREFKVEANVGKPQVAYKETIKRLVEKVEFTHKKQTGGSGQFAKVLISIEPFTGEDGATYEFESKVTGGRIPREYIPSVDAGAQDAMQYGVLAGYPLVNLKVTLLDGAFHEVDSSEMAFKIAGSQVLKKAAAAAHPVILEPIMAVEVTTPEDYMGDVIGDLNSRRGQIQAMEERSGARVVKAHVPLSEMFGYVGDLRSKTQGRANYSMVFDSYAEVPANVSKEIIAKATGE.

The region spanning 11 to 287 is the tr-type G domain; it reads TKVRNIGIMA…AVIDYLPSPL (277 aa). GTP-binding positions include 20 to 27, 84 to 88, and 138 to 141; these read AHIDAGKT, DTPGH, and NKMD.

This sequence belongs to the TRAFAC class translation factor GTPase superfamily. Classic translation factor GTPase family. EF-G/EF-2 subfamily.

The protein localises to the cytoplasm. Its function is as follows. Catalyzes the GTP-dependent ribosomal translocation step during translation elongation. During this step, the ribosome changes from the pre-translocational (PRE) to the post-translocational (POST) state as the newly formed A-site-bound peptidyl-tRNA and P-site-bound deacylated tRNA move to the P and E sites, respectively. Catalyzes the coordinated movement of the two tRNA molecules, the mRNA and conformational changes in the ribosome. In Mycobacterium marinum (strain ATCC BAA-535 / M), this protein is Elongation factor G.